The sequence spans 210 residues: Somatotropin-1 (210 aa).

Positions 1-22 (MARALVLLSVVLVSLLVNQGRA) are cleaved as a signal peptide. H38 is a binding site for Zn(2+). C71 and C183 are joined by a disulfide. Residue E192 participates in Zn(2+) binding. C200 and C208 form a disulfide bridge.

Belongs to the somatotropin/prolactin family.

Its subcellular location is the secreted. In terms of biological role, growth hormone plays an important role in growth control and is involved in the regulation of several anabolic processes. Implicated as an osmoregulatory substance important for seawater adaptation. The chain is Somatotropin-1 (gh1) from Carassius auratus (Goldfish).